Here is a 513-residue protein sequence, read N- to C-terminus: Cytochrome P450 72A552 (513 aa).

A helical membrane pass occupies residues 2–22 (EISVASVTVSVVIAVVTWWVW). Cys-460 lines the heme pocket.

It belongs to the cytochrome P450 family. Heme serves as cofactor.

It is found in the membrane. The catalysed reaction is oleanolate + reduced [NADPH--hemoprotein reductase] + O2 = hederagenin + oxidized [NADPH--hemoprotein reductase] + H2O + H(+). Its function is as follows. Catalyzes the oxidation of oleanolate at the C-23 position to form hederagenin. In Barbarea vulgaris (Yellow rocket), this protein is Cytochrome P450 72A552.